The sequence spans 404 residues: Lysophospholipid transporter LplT (404 aa).

Transmembrane regions (helical) follow at residues 16 to 36 (MIAV…LLFA), 53 to 73 (ILQM…GQFA), 91 to 111 (AGAL…LVGV), 139 to 159 (MMEA…GVLA), 164 to 184 (GVAL…NMFI), 195 to 213 (SWRP…LVLW), 227 to 247 (LFWG…PIAL), 253 to 273 (ATPT…AGAA), 285 to 305 (CLPA…QHSM), 310 to 330 (LLLI…NALL), 350 to 370 (GENT…KLGV), and 372 to 392 (VIAV…LLWG).

It belongs to the major facilitator superfamily. LplT (TC 2.A.1.42) family.

Its subcellular location is the cell inner membrane. In terms of biological role, catalyzes the facilitated diffusion of 2-acyl-glycero-3-phosphoethanolamine (2-acyl-GPE) into the cell. This chain is Lysophospholipid transporter LplT, found in Yersinia enterocolitica serotype O:8 / biotype 1B (strain NCTC 13174 / 8081).